The following is a 291-amino-acid chain: Kidney mitochondrial carrier protein 1 (291 aa).

Ser-2 bears the N-acetylserine mark. 3 Solcar repeats span residues 7–96, 104–189, and 198–289; these read KPFV…LKRL, ETLL…TKKH, and DTVS…LKKL. 6 helical membrane passes run 9–26, 71–89, 106–124, 164–183, 204–224, and 264–283; these read FVYGGLASITAECGTFPI, GIAPAMLRQASYGTIKIGT, LLINVVCGILSGVISSAIA, GVSLTAQRAAIVVGVELPVY, FLSSFTCGLVGALASNPVDVV, and GFWPNWLRLGPWNIIFFLTY.

This sequence belongs to the mitochondrial carrier (TC 2.A.29) family. Interacts with VDAC1.

The protein localises to the mitochondrion inner membrane. It catalyses the reaction sulfite(in) + sulfate(out) = sulfite(out) + sulfate(in). The catalysed reaction is thiosulfate(in) + sulfate(out) = thiosulfate(out) + sulfate(in). It carries out the reaction sulfate(out) + phosphate(in) = sulfate(in) + phosphate(out). The enzyme catalyses oxalate(in) + sulfate(out) = oxalate(out) + sulfate(in). It catalyses the reaction malonate(in) + sulfate(out) = malonate(out) + sulfate(in). The catalysed reaction is maleate(in) + sulfate(out) = maleate(out) + sulfate(in). It carries out the reaction (S)-malate(in) + sulfate(out) = (S)-malate(out) + sulfate(in). The enzyme catalyses (3S)-citramalate(in) + sulfate(out) = (3S)-citramalate(out) + sulfate(in). It catalyses the reaction (3R)-citramalate(in) + sulfate(out) = (3R)-citramalate(out) + sulfate(in). The catalysed reaction is sulfate(out) + succinate(in) = sulfate(in) + succinate(out). It carries out the reaction (S,S)-tartrate(in) + sulfate(out) = (S,S)-tartrate(out) + sulfate(in). The enzyme catalyses (2R,3R)-tartrate(in) + sulfate(out) = (2R,3R)-tartrate(out) + sulfate(in). It catalyses the reaction D-aspartate(in) + sulfate(out) = D-aspartate(out) + sulfate(in). The catalysed reaction is L-aspartate(in) + sulfate(out) = L-aspartate(out) + sulfate(in). It carries out the reaction sulfate(in) = sulfate(out). The enzyme catalyses phosphate(in) = phosphate(out). It catalyses the reaction (S)-malate(out) = (S)-malate(in). In terms of biological role, antiporter that transports inorganic anions (sulfate, sulfite, thiosulfate and phosphate) and, to a lesser extent, a variety of dicarboxylates (e.g. malonate, malate and citramalate) and, even more so, aspartate. The sulfate/sulfate exchange is much higher than the phosphate/phosphate and malate/malate exchanges. The transport affinities is higher for sulfate and thiosulfate than for any other substrate. May catalyze the export of sulfite and thiosulfate (the hydrogen sulfide degradation products) from the mitochondria, thereby modulating the level of the hydrogen sulfide. Also may mediate a very low unidirectional transport of sulfate, phosphate and (S)-malate. The sequence is that of Kidney mitochondrial carrier protein 1 from Rattus norvegicus (Rat).